The following is a 1641-amino-acid chain: Histone-lysine N-methyltransferase SETD1 (1641 aa).

Residues 1–23 (MQDVRNINLVNNSSNSHDSSLAN) are disordered. Over residues 8 to 23 (NLVNNSSNSHDSSLAN) the composition is skewed to low complexity. Positions 101 to 179 (VEVTIVNLND…KILDVFCDPF (79 aa)) constitute an RRM domain. Disordered regions lie at residues 236 to 384 (YTTQ…IDQR), 537 to 596 (APPF…SDEE), 831 to 915 (RIRK…SSSS), 930 to 949 (KART…NLNQ), 1119 to 1155 (QEKR…RKTA), and 1205 to 1226 (NSKG…SSQA). Residues 244-284 (IPNRSRDRNWNRDKERERDRHFKERSRHSSERSYDRDRGMR) are compositionally biased toward basic and acidic residues. A compositionally biased stretch (basic residues) spans 291–300 (IRRRRTFYRR). Basic and acidic residues-rich tracts occupy residues 308–341 (EDSR…ESFR) and 349–384 (KGRD…IDQR). Low complexity predominate over residues 556 to 568 (EVFSDVNSDSNNS). Composition is skewed to basic and acidic residues over residues 569-579 (ENKKRSCEKNN) and 844-867 (NFLE…KEDS). A compositionally biased stretch (low complexity) spans 904–915 (SASSFFSSSSSS). Composition is skewed to basic and acidic residues over residues 930-939 (KARTSEEDSP) and 1119-1128 (QEKRIEKSLD). Residues 1091–1132 (SEEEKEYQERRKRNTEYMAQMEREFLEEQEKRIEKSLDKNLQ) are a coiled coil. Composition is skewed to polar residues over residues 1129-1145 (KNLQ…NSPR) and 1205-1217 (NSKG…QSPV). The short motif at 1473–1478 (RSNQRR) is the RxxxRR motif element. The region spanning 1502 to 1619 (KQLKFAKSAI…INEEITYDYK (118 aa)) is the SET domain. Position 1618 (tyrosine 1618) interacts with S-adenosyl-L-methionine. Residues 1625–1641 (EKIPCLCGAQGCRGTLN) enclose the Post-SET domain.

The protein belongs to the class V-like SAM-binding methyltransferase superfamily. As to quaternary structure, component of the Set1C/COMPASS complex, composed at least of the catalytic subunit Set1, wds/WDR5, Wdr82, Rbbp5, ash2, Cfp1/CXXC1, hcf and Dpy-30L1.

Its subcellular location is the nucleus. It localises to the chromosome. It carries out the reaction L-lysyl(4)-[histone H3] + 3 S-adenosyl-L-methionine = N(6),N(6),N(6)-trimethyl-L-lysyl(4)-[histone H3] + 3 S-adenosyl-L-homocysteine + 3 H(+). It catalyses the reaction N(6)-methyl-L-lysyl(4)-[histone H3] + S-adenosyl-L-methionine = N(6),N(6)-dimethyl-L-lysyl(4)-[histone H3] + S-adenosyl-L-homocysteine + H(+). The catalysed reaction is N(6),N(6)-dimethyl-L-lysyl(4)-[histone H3] + S-adenosyl-L-methionine = N(6),N(6),N(6)-trimethyl-L-lysyl(4)-[histone H3] + S-adenosyl-L-homocysteine + H(+). Catalytic component of the COMPASS (Set1C) complex that specifically mono-, di- and trimethylates histone H3 to form H3K4me1/2/3. Binds RNAs which might negatively affect its histone methyltransferase activity. COMPASS recognizes ubiquitinated H2B on one face of the nucleosome which stimulates the methylation of H3 on the opposing face. Set1-dependent trimethylation regulates chromatin changes at active promoters that ensure optimal RNA polymerase II release into productive elongation, thereby contributing to optimal transcription. In Drosophila melanogaster (Fruit fly), this protein is Histone-lysine N-methyltransferase SETD1.